The chain runs to 986 residues: MARKIGSVRIEVLEGRNLVPMDSNGMSDPYGVVIVGDKKKKTKAIKHTLFPKWESDNCFEFDIDVNLLAITVEVYDWDRFSSDDRMGLTNIPVSQIQEYIVDTTKWYTLQPMKPNDKVSGEIKLKIRFDKDKTLPPPEKSPFIKAIKDNDTQAIELMMNKAKLDYTICDNEGTPAIHIAAASNNIPLITMLLKGSDARVSIRDQHGNTPLHLFVQKNVSLNCEDIINKLIERGCGINDENNLGETALHKACLATVVQKTTIVEQLLQKGAIINHQTKTRDTPLHYAIKVGKVEFVRFFLQNGANVMIEGGKPSRTPLELAKELGNPQIISKVEKVIEISDWLNELQLETLIPKFIKNEIYMDVITDINEGTLDLLNISVSGQRTKLLRAVRKIKDPLSLSSNSSLRSNSLIHVENDNNNNNNNNNNNNNSQEQCNINNDSLGSGNRNSGGFKAQNQNNTLNNNNVESKSTGNLNSLKNIHNVNNDNNEDKKNNILSPNPIPASSSAPAAPSPVAIGSNTTTTTTTAIAATTTTLTTTATTEDKTTTESTTPPQQQQQTTTITPTKTTTVTPEGPNLDVSDLSVLKHINLDSDSWVIDEKTLTYNVLLGTGASGKVYKGTFNGQEVAIKVLKSFTDKKDIAEFKKEFQIVSALRAPGVVYFHGAGIKDKLCIVMEYCSRGSLYHILKDDTTQFTWDNFFNLGTQAINSLDSLHNWTPQVLHRDLKSLNLLVTENWTVKICDFGLSRFDTGSNLETLGKLRGTYAYVAPEVYFGKKYTTKSDVYSMGIILWEMTYRCIKGTHLLPYAEYPHLKFDYQILISSAKKDVRPTTPENAPESLKNLIARTLVKDSTLRPTTLEFYEELLKIRDEYNANREQWDSIRTIPPQQLPKPIINEEIIPSIDSNNINNNNNNNNTTVTSEKPKLRYQPSNSNLLNNNNNNNNNDSDNNISEPATTDSITKPISKVKEQLLTRTRSSSSPMEPKSIKK.

The region spanning M1–Y107 is the C2 domain. Ca(2+)-binding residues include D22, D28, D76, D78, S81, and D84. 6 ANK repeats span residues P137 to I167, E171 to I201, H205 to D238, L242 to H274, T278 to I307, and P312 to E344. The SAM domain occupies E333–P396. Residues H412–N438 are compositionally biased toward low complexity. Disordered stretches follow at residues H412–T520 and T532–P574. Residues D439–S448 are compositionally biased toward polar residues. Residues Q454–N464 are compositionally biased toward low complexity. The span at V465 to L476 shows a compositional bias: polar residues. Low complexity-rich tracts occupy residues N493–T520 and T546–P571. A Protein kinase domain is found at L601 to N870. ATP is bound by residues L607–V615 and K628. D722 acts as the Proton acceptor in catalysis. 2 stretches are compositionally biased toward low complexity: residues D901–N913 and S928–N947. Positions D901 to K986 are disordered. 2 stretches are compositionally biased toward polar residues: residues I948–K959 and L969–P978.

The protein belongs to the protein kinase superfamily. TKL Ser/Thr protein kinase family. Ca(2+) serves as cofactor.

It catalyses the reaction L-seryl-[protein] + ATP = O-phospho-L-seryl-[protein] + ADP + H(+). The enzyme catalyses L-threonyl-[protein] + ATP = O-phospho-L-threonyl-[protein] + ADP + H(+). The protein is Probable serine/threonine-protein kinase DDB_G0272092 of Dictyostelium discoideum (Social amoeba).